A 300-amino-acid polypeptide reads, in one-letter code: Solute carrier family 25 member 35 (300 aa).

Solcar repeat units follow at residues 1–90, 100–193, and 203–294; these read MDFL…AEAG, HSPA…TKDL, and QSWK…LRSL. A run of 6 helical transmembrane segments spans residues 38 to 58, 59 to 79, 91 to 119, 169 to 190, 205 to 225, and 277 to 300; these read TYQRHYRNVFHAFITIGKVDG, LAALQKGLAPALLYQFLMNGI, GYLHTAEGTHSPARSAAAGAMAGVMGAYL, ALGGLPRVIVGSSTQLCTFSST, WKLALVAAMMSGIAVVLAMAP, and LGPHTILSLFFWDQLRSLYYTDTK.

Belongs to the mitochondrial carrier (TC 2.A.29) family.

Its subcellular location is the mitochondrion inner membrane. It carries out the reaction a dicarboxylate(in) + sulfate(out) = a dicarboxylate(out) + sulfate(in). Putative antiporter that exchanges dicarboxylates and sulfur oxoanions across the inner membrane of mitochondria. This chain is Solute carrier family 25 member 35 (SLC25A35), found in Homo sapiens (Human).